A 326-amino-acid chain; its full sequence is MKFVDSAKIYVKGGNGGNGCMSFRREKYVPKGGPDGGDGGRGGHVYLRADGQMSTLLDFRYKKHYEAQRGVHGQGSKKNGKMGKDTVIPVPCGTVVRNAADGSLIADLTEEGEELLVAEGGKGGKGNPHFASSTRQAPRYAEPGGVGMALEIELELKLMADVGLVGFPNAGKSTLISSVSAARPKIADYPFTTLVPNLGIVQYREYSSFVMADIPGIIEGAAEGKGLGLQFLKHIERTKVLAVLIAADSEDIEAEYASLKREMERFGSGLLEKPRVVLITKMDIAPEDFSVPSFSDDAPVLMISSVTGEGIDVLKDELWSRVKSEG.

Positions 1–159 (MKFVDSAKIY…LEIELELKLM (159 aa)) constitute an Obg domain. A disordered region spans residues 119–138 (EGGKGGKGNPHFASSTRQAP). The OBG-type G domain occupies 160 to 323 (ADVGLVGFPN…LKDELWSRVK (164 aa)). GTP is bound by residues 166-173 (GFPNAGKS), 191-195 (FTTLV), 213-216 (DIPG), 280-283 (TKMD), and 304-306 (SSV). Mg(2+) is bound by residues serine 173 and threonine 193.

The protein belongs to the TRAFAC class OBG-HflX-like GTPase superfamily. OBG GTPase family. As to quaternary structure, monomer. Mg(2+) serves as cofactor.

Its subcellular location is the cytoplasm. In terms of biological role, an essential GTPase which binds GTP, GDP and possibly (p)ppGpp with moderate affinity, with high nucleotide exchange rates and a fairly low GTP hydrolysis rate. Plays a role in control of the cell cycle, stress response, ribosome biogenesis and in those bacteria that undergo differentiation, in morphogenesis control. The protein is GTPase Obg of Chlorobium phaeobacteroides (strain BS1).